Consider the following 520-residue polypeptide: Gamma aminobutyrate transaminase 3, chloroplastic (520 aa).

The transit peptide at 1–44 directs the protein to the chloroplast; that stretch reads MAKITSLIGSGIVAATNQVGPHVKHIPAVGNLQKQIVSDQIQVR. Position 172–173 (172–173) interacts with pyridoxal 5'-phosphate; it reads GS. Residue tyrosine 205 coordinates substrate. Position 312 (aspartate 312) interacts with pyridoxal 5'-phosphate. Lysine 341 lines the substrate pocket. An N6-(pyridoxal phosphate)lysine modification is found at lysine 341.

Belongs to the class-III pyridoxal-phosphate-dependent aminotransferase family. Expressed in leaves, roots, stems, flowers and fruits.

It localises to the plastid. Its subcellular location is the chloroplast. The enzyme catalyses 4-aminobutanoate + pyruvate = succinate semialdehyde + L-alanine. The catalysed reaction is 4-aminobutanoate + glyoxylate = succinate semialdehyde + glycine. In terms of biological role, transaminase that degrades gamma-amino butyric acid (GABA) and uses pyruvate or glyoxylate as amino-group acceptor. Cannot use beta-alanine, ornithine, acetylornithine, serine, glycine, asparagine, glutamine, glutamate, valine, leucine, isoleucine, methionine, phenylalanine, histidine, lysine, arginine, aspartate, threonine, tyrosine, tryptophan, proline, or cysteine as amino donors. The polypeptide is Gamma aminobutyrate transaminase 3, chloroplastic (GABA-TP3) (Solanum lycopersicum (Tomato)).